The sequence spans 534 residues: uncharacterized protein (534 aa).

This is an uncharacterized protein from Escherichia coli (strain K12).